Reading from the N-terminus, the 582-residue chain is Threonine--tRNA ligase (582 aa).

Positions 185–478 (DHRKLGKELE…LTEQYGGAFP (294 aa)) are catalytic. Residues Cys278, His329, and His455 each coordinate Zn(2+).

This sequence belongs to the class-II aminoacyl-tRNA synthetase family. Homodimer. Zn(2+) serves as cofactor.

Its subcellular location is the cytoplasm. It catalyses the reaction tRNA(Thr) + L-threonine + ATP = L-threonyl-tRNA(Thr) + AMP + diphosphate + H(+). Its function is as follows. Catalyzes the attachment of threonine to tRNA(Thr) in a two-step reaction: L-threonine is first activated by ATP to form Thr-AMP and then transferred to the acceptor end of tRNA(Thr). Also edits incorrectly charged L-seryl-tRNA(Thr). This chain is Threonine--tRNA ligase, found in Dehalococcoides mccartyi (strain ATCC BAA-2100 / JCM 16839 / KCTC 5957 / BAV1).